A 168-amino-acid polypeptide reads, in one-letter code: Myosin regulatory light chain 11 (168 aa).

Position 2 is a n,N,N-trimethylalanine (A2). Residue S15 is modified to Phosphoserine. EF-hand domains are found at residues 24 to 59 (TQIQ…MGRL), 94 to 129 (DPED…QCDR), and 130 to 165 (FTPE…GEDK). 4 residues coordinate Ca(2+): D37, N39, D41, and D48.

Myosin is a hexamer of 2 heavy chains and 4 light chains. Post-translationally, the N-terminus is blocked. N,N,N-trimethylalanine, found in other myosin light chains would not have been detected in the N-terminal tryptic peptide in PubMed:7358336 because it would remain trimethylated and ninhydrin negative after hydrolysis.

Myosin regulatory subunit that plays an essential to maintain muscle integrity during early development. Plays a role in muscle contraction. The sequence is that of Myosin regulatory light chain 11 (MYL11) from Gallus gallus (Chicken).